The sequence spans 400 residues: 1-deoxy-D-xylulose 5-phosphate reductoisomerase (400 aa).

5 residues coordinate NADPH: T17, G18, S19, I20, and N131. Residue K132 coordinates 1-deoxy-D-xylulose 5-phosphate. E133 is an NADPH binding site. D157 lines the Mn(2+) pocket. 1-deoxy-D-xylulose 5-phosphate contacts are provided by S158, E159, S188, and H211. Residue E159 coordinates Mn(2+). Residue G217 participates in NADPH binding. Residues S224, N229, K230, and E233 each coordinate 1-deoxy-D-xylulose 5-phosphate. E233 is a Mn(2+) binding site.

The protein belongs to the DXR family. The cofactor is Mg(2+). It depends on Mn(2+) as a cofactor.

It catalyses the reaction 2-C-methyl-D-erythritol 4-phosphate + NADP(+) = 1-deoxy-D-xylulose 5-phosphate + NADPH + H(+). The protein operates within isoprenoid biosynthesis; isopentenyl diphosphate biosynthesis via DXP pathway; isopentenyl diphosphate from 1-deoxy-D-xylulose 5-phosphate: step 1/6. In terms of biological role, catalyzes the NADPH-dependent rearrangement and reduction of 1-deoxy-D-xylulose-5-phosphate (DXP) to 2-C-methyl-D-erythritol 4-phosphate (MEP). The sequence is that of 1-deoxy-D-xylulose 5-phosphate reductoisomerase from Pseudomonas putida (strain ATCC 700007 / DSM 6899 / JCM 31910 / BCRC 17059 / LMG 24140 / F1).